Here is a 144-residue protein sequence, read N- to C-terminus: Large ribosomal subunit protein uL16 (144 aa).

The protein belongs to the universal ribosomal protein uL16 family. In terms of assembly, part of the 50S ribosomal subunit.

Binds 23S rRNA and is also seen to make contacts with the A and possibly P site tRNAs. This Bacillus cereus (strain ATCC 10987 / NRS 248) protein is Large ribosomal subunit protein uL16.